Here is a 689-residue protein sequence, read N- to C-terminus: SH3 domain-binding protein 1 (689 aa).

Basic residues predominate over residues 1 to 11; the sequence is MMKRQLHRMRQ. Positions 1–24 are disordered; that stretch reads MMKRQLHRMRQLAHTGSSGRTPET. Residues 1 to 275 are interaction with CGNL1; sequence MMKRQLHRMR…TAAPFSRVYG (275 aa). The region spanning 17-262 is the BAR domain; that stretch reads SSGRTPETAE…RDNHSQADSS (246 aa). Phosphoserine is present on residues S241 and S262. Residues 276-469 form the Rho-GAP domain; sequence VSLRTHLQDL…VLIQNADTLF (194 aa). Residues 470–689 form an interaction with CD2AP region; the sequence is PGDINFSVSG…RPRGLISETD (220 aa). The segment at 507 to 689 is disordered; that stretch reads TAATPTPTPA…RPRGLISETD (183 aa). A phosphoserine mark is found at S539 and S545. A compositionally biased stretch (pro residues) spans 565 to 575; sequence PARPTMPPPQP. The span at 576-594 shows a compositional bias: low complexity; it reads SSSRSSPPALSLPAGSVSP. S586 carries the post-translational modification Phosphoserine. T596 is modified (phosphothreonine). The SH3-binding signature appears at 611–620; the sequence is APTVPPPLPP. The span at 613–625 shows a compositional bias: pro residues; it reads TVPPPLPPAPPQP. Phosphoserine is present on S641. Residues 670 to 680 are compositionally biased toward pro residues; the sequence is PPTPVLPPQPR.

As to quaternary structure, interacts with RAC1. Interacts with the exocyst via EXOC4 and EXOC8; required for the localization of both SH3BP1 and the exocyst to the leading edge of migrating cells. Interacts with CD2AP and CGNL1; probably part of a complex at cell junctions. Interacts with CAPZA1; recruits CAPZA1 to forming cell junctions. May interact with AFDN. Interacts with PLXND1; they dissociate upon SEMA3E binding to PLXND1 allowing SH3BP1 to transduce downstream signal through RAC1 inactivation. Interacts with ABL1, GRB2 and SRC (via SH3 domain).

The protein localises to the cell projection. It is found in the cell junction. Its subcellular location is the tight junction. The protein resides in the adherens junction. It localises to the phagocytic cup. The protein localises to the nucleus. It is found in the cytoplasm. Its subcellular location is the cytosol. Functionally, GTPase activating protein/GAP which specifically converts GTP-bound Rho-type GTPases including RAC1 and CDC42 in their inactive GDP-bound form. By specifically inactivating RAC1 at the leading edge of migrating cells, it regulates the spatiotemporal organization of cell protrusions which is important for proper cell migration. Also negatively regulates CDC42 in the process of actin remodeling and the formation of epithelial cell junctions. Through its GAP activity toward RAC1 and/or CDC42 plays a specific role in phagocytosis of large particles. Specifically recruited by a PI3 kinase/PI3K-dependent mechanism to sites of large particles engagement, inactivates RAC1 and/or CDC42 allowing the reorganization of the underlying actin cytoskeleton required for engulfment. It also plays a role in angiogenesis and the process of repulsive guidance as part of a semaphorin-plexin signaling pathway. Following the binding of PLXND1 to extracellular SEMA3E it dissociates from PLXND1 and inactivates RAC1, inducing the intracellular reorganization of the actin cytoskeleton and the collapse of cells. The sequence is that of SH3 domain-binding protein 1 from Rattus norvegicus (Rat).